We begin with the raw amino-acid sequence, 153 residues long: Two-component response regulator ARR17 (153 aa).

The Response regulatory domain maps to 21 to 149 (HVLAVDDNLI…DVEKLKCHLL (129 aa)). Asp-82 carries the 4-aspartylphosphate modification.

This sequence belongs to the ARR family. Type-A subfamily. In terms of processing, two-component system major event consists of a His-to-Asp phosphorelay between a sensor histidine kinase (HK) and a response regulator (RR). In plants, the His-to-Asp phosphorelay involves an additional intermediate named Histidine-containing phosphotransfer protein (HPt). This multistep phosphorelay consists of a His-Asp-His-Asp sequential transfer of a phosphate group between first a His and an Asp of the HK protein, followed by the transfer to a conserved His of the HPt protein and finally the transfer to an Asp in the receiver domain of the RR protein.

Its subcellular location is the nucleus. Functions as a response regulator involved in His-to-Asp phosphorelay signal transduction system. Phosphorylation of the Asp residue in the receiver domain activates the ability of the protein to promote the transcription of target genes. Type-A response regulators seem to act as negative regulators of the cytokinin signaling. This Arabidopsis thaliana (Mouse-ear cress) protein is Two-component response regulator ARR17 (ARR17).